Consider the following 165-residue polypeptide: NADPH-dependent 7-cyano-7-deazaguanine reductase (165 aa).

Cysteine 56 functions as the Thioimide intermediate in the catalytic mechanism. The active-site Proton donor is the aspartate 63. Substrate contacts are provided by residues 78–80 (VES) and 97–98 (HE).

This sequence belongs to the GTP cyclohydrolase I family. QueF type 1 subfamily.

Its subcellular location is the cytoplasm. It carries out the reaction 7-aminomethyl-7-carbaguanine + 2 NADP(+) = 7-cyano-7-deazaguanine + 2 NADPH + 3 H(+). The protein operates within tRNA modification; tRNA-queuosine biosynthesis. Its activity is regulated as follows. Is totally inhibited by 4-aminobenzylcyanide in vitro. Catalyzes the NADPH-dependent reduction of 7-cyano-7-deazaguanine (preQ0) to 7-aminomethyl-7-deazaguanine (preQ1), a late step in the queuosine pathway. Is highly specific for its natural substrate preQ0, since it cannot use various aliphatic, aromatic and heterocyclic nitriles, although it can reduce the substrate analog 5-cyanopyrrolo[2,3-d]pyrimidin-4-one with lesser efficiency. The protein is NADPH-dependent 7-cyano-7-deazaguanine reductase of Geobacillus kaustophilus (strain HTA426).